Consider the following 500-residue polypeptide: L-arabinose isomerase (500 aa).

Positions 306, 333, 349, and 448 each coordinate Mn(2+).

This sequence belongs to the arabinose isomerase family. It depends on Mn(2+) as a cofactor.

It carries out the reaction beta-L-arabinopyranose = L-ribulose. The protein operates within carbohydrate degradation; L-arabinose degradation via L-ribulose; D-xylulose 5-phosphate from L-arabinose (bacterial route): step 1/3. In terms of biological role, catalyzes the conversion of L-arabinose to L-ribulose. This is L-arabinose isomerase from Shewanella sp. (strain MR-4).